Consider the following 221-residue polypeptide: Fructokinase (221 aa).

The protein belongs to the carbohydrate kinase PfkB family.

It catalyses the reaction D-fructose + ATP = D-fructose 6-phosphate + ADP + H(+). This chain is Fructokinase (scrK), found in Salmonella thompson.